A 100-amino-acid chain; its full sequence is MNLTPREKDKLLIAMAAIVARKRLERGVKLNHPEAIALITDFVVEGARDGRPVAELMEAGAHVVTRAQVMQGIAEMIHDVQVEATFPDGTKLVTVHAPIR.

This sequence belongs to the urease gamma subunit family. Heterotrimer of UreA (gamma), UreB (beta) and UreC (alpha) subunits. Three heterotrimers associate to form the active enzyme.

It localises to the cytoplasm. The catalysed reaction is urea + 2 H2O + H(+) = hydrogencarbonate + 2 NH4(+). Its pathway is nitrogen metabolism; urea degradation; CO(2) and NH(3) from urea (urease route): step 1/1. This Mesorhizobium japonicum (strain LMG 29417 / CECT 9101 / MAFF 303099) (Mesorhizobium loti (strain MAFF 303099)) protein is Urease subunit gamma.